We begin with the raw amino-acid sequence, 314 residues long: tRNA dimethylallyltransferase (314 aa).

Residues 1–25 (MAEEPQRSPAPTSPFAFTVPSNSLS) form a disordered region. 40-47 (GPTASGKS) lines the ATP pocket. Residue 42–47 (TASGKS) participates in substrate binding.

The protein belongs to the IPP transferase family. In terms of assembly, monomer. Mg(2+) is required as a cofactor.

It carries out the reaction adenosine(37) in tRNA + dimethylallyl diphosphate = N(6)-dimethylallyladenosine(37) in tRNA + diphosphate. Functionally, catalyzes the transfer of a dimethylallyl group onto the adenine at position 37 in tRNAs that read codons beginning with uridine, leading to the formation of N6-(dimethylallyl)adenosine (i(6)A). The polypeptide is tRNA dimethylallyltransferase (Cereibacter sphaeroides (strain ATCC 17023 / DSM 158 / JCM 6121 / CCUG 31486 / LMG 2827 / NBRC 12203 / NCIMB 8253 / ATH 2.4.1.) (Rhodobacter sphaeroides)).